Consider the following 187-residue polypeptide: Ribulose bisphosphate carboxylase small subunit, chloroplastic (187 aa).

A chloroplast-targeting transit peptide spans 1-56 (MASSVMSTATVATGANAAQASMIASFNGLKSAASFPVTRKQDLDITSIASNGGRVE).

This sequence belongs to the RuBisCO small chain family. In terms of assembly, heterohexadecamer of 8 large and 8 small subunits.

The protein resides in the plastid. The protein localises to the chloroplast. In terms of biological role, ruBisCO catalyzes two reactions: the carboxylation of D-ribulose 1,5-bisphosphate, the primary event in carbon dioxide fixation, as well as the oxidative fragmentation of the pentose substrate. Both reactions occur simultaneously and in competition at the same active site. Although the small subunit is not catalytic it is essential for maximal activity. This Capsicum annuum (Capsicum pepper) protein is Ribulose bisphosphate carboxylase small subunit, chloroplastic.